The sequence spans 89 residues: Phytosulfokines 1 (89 aa).

The first 22 residues, 1–22 (MVNPGRTARALCLLCLALLLLG), serve as a signal peptide directing secretion. A propeptide spanning residues 23–79 (QDTHSRKLLLQEKHSHGVGNGTTTTQEPSRENGGSTGSNNNGQLQFDSAKWEEFHTD) is cleaved from the precursor. Residues 33 to 68 (QEKHSHGVGNGTTTTQEPSRENGGSTGSNNNGQLQF) are disordered. Residue Asn-42 is glycosylated (N-linked (GlcNAc...) asparagine). Sulfotyrosine is present on residues Tyr-80 and Tyr-82. The propeptide occupies 85-89 (DVKNP).

It belongs to the phytosulfokine family. Post-translationally, sulfation is important for activity and for the binding to a putative membrane receptor. In terms of processing, PSK-alpha is produced by endopeptidase digestion. PSK-beta is produced from PSK-alpha by exopeptidase digestion. Expressed throughout the seedling. More abundant in fragments containing shoot or root apexes where cells proliferate vigorously.

It is found in the secreted. Functionally, promotes plant cell differentiation, organogenesis and somatic embryogenesis as well as cell proliferation. This chain is Phytosulfokines 1 (PSK1), found in Oryza sativa subsp. indica (Rice).